Consider the following 543-residue polypeptide: MLTLLHLLSAVALLVWGTHIVRTGVMRVFGARLRTVLSRSVEKKPLAFCAGIGVTALVQSSNATTLLVTSFVAQDLVALTPALVIVLGADVGTALMARILTFDLSWLSPLLIFIGVIFFLGRKQSRAGQLGRVGIGLGLILLALELIVQAVTPITQANGVQVIFASLTGDIMLDALIGAMFAIISYSSLAAVLLTATLTAAGIISFPVALCLVIGANLGSGLLAMLNNSAANAAARRVALGSLLFKLIGSLVILPFVHPLANLMDELSLPKSELVIYFHVFYNLVRCLAMVPFAELMARFCKRIIRDEPELDTHLKPKHLDVSALDTPTLALANAAREVLRIGDAMEQMMEGLKKVMHGEPREEKALRKLADDVNVLYTAIKLYLARMPKDELAAEESRRWAEIIEMALNLEQASDIIERMGSEIADKSLAARRAFSEEGLKELDALYDQLLSNLQLAMSVFFSGDVTSARRLRRSKHRFRILNRRYSHAHVDRLHQQNVQSIETSSLHLGLLGDMKRLNSLFCSVAYSVLEQPDQDEERGEY.

The next 8 membrane-spanning stretches (helical) occupy residues 1–21 (MLTL…THIV), 76–96 (LVAL…TALM), 99–119 (ILTF…VIFF), 134–154 (GIGL…VTPI), 175–195 (ALIG…VLLT), 196–216 (ATLT…VIGA), 238–258 (VALG…PFVH), and 274–294 (LVIY…VPFA).

Belongs to the YjbB family.

Its subcellular location is the cell inner membrane. It catalyses the reaction phosphate(in) = phosphate(out). In terms of biological role, might be involved in phosphate export. The polypeptide is Putative inorganic phosphate export protein YjbB (yjbB) (Salmonella typhimurium (strain LT2 / SGSC1412 / ATCC 700720)).